The chain runs to 494 residues: Alpha-amylase B (494 aa).

The signal sequence occupies residues 1 to 18; sequence MFLAKSIVCLALLAVANA. Q19 is modified (pyrrolidone carboxylic acid). A disulfide bridge connects residues C46 and C102. Positions 116, 165, and 174 each coordinate Ca(2+). The cysteines at positions 153 and 167 are disulfide-linked. R202 contacts chloride. Catalysis depends on D204, which acts as the Nucleophile. Residue H208 coordinates Ca(2+). The active-site Proton donor is the E241. 2 residues coordinate chloride: N304 and R343. 2 cysteine pairs are disulfide-bonded: C376/C382 and C448/C460.

This sequence belongs to the glycosyl hydrolase 13 family. As to quaternary structure, monomer. Requires Ca(2+) as cofactor. The cofactor is chloride.

The catalysed reaction is Endohydrolysis of (1-&gt;4)-alpha-D-glucosidic linkages in polysaccharides containing three or more (1-&gt;4)-alpha-linked D-glucose units.. In Drosophila melanogaster (Fruit fly), this protein is Alpha-amylase B (Amy-d).